Here is a 211-residue protein sequence, read N- to C-terminus: Thymidylate kinase (211 aa).

11-18 is an ATP binding site; the sequence is GPDGAGKT.

The protein belongs to the thymidylate kinase family.

It carries out the reaction dTMP + ATP = dTDP + ADP. Phosphorylation of dTMP to form dTDP in both de novo and salvage pathways of dTTP synthesis. This Streptococcus equi subsp. equi (strain 4047) protein is Thymidylate kinase.